The sequence spans 197 residues: Lipid A acyltransferase PagP (197 aa).

The N-terminal stretch at 1–24 is a signal peptide; the sequence is MMFFKRTILACTVALLFPALPSYA. Catalysis depends on residues His69, Asp112, and Ser113.

It belongs to the lipid A palmitoyltransferase family. Homodimer.

The protein resides in the cell outer membrane. It catalyses the reaction a lipid A + a 1,2-diacyl-sn-glycero-3-phosphocholine = a hepta-acyl lipid A + a 2-acyl-sn-glycero-3-phosphocholine. The enzyme catalyses a lipid IVA + a 1,2-diacyl-sn-glycero-3-phosphocholine = a lipid IVB + a 2-acyl-sn-glycero-3-phosphocholine. The catalysed reaction is a lipid IIA + a 1,2-diacyl-sn-glycero-3-phosphocholine = a lipid IIB + a 2-acyl-sn-glycero-3-phosphocholine. In terms of biological role, transfers a fatty acid residue from the sn-1 position of a phospholipid to the N-linked hydroxyfatty acid chain on the proximal unit of lipid A or its precursors. The protein is Lipid A acyltransferase PagP of Serratia proteamaculans (strain 568).